Reading from the N-terminus, the 222-residue chain is MSVRHSGIGMTSPRTRVRMVERLREQGVRDEVVLAAMGSIPRHLFVEEALASRAYEDVALPINYGQTISSPWIVGRMSELLRNGGNNSLRKVLEIGTGCGYQTAVLAKIANEVYSIERIGPLLTRTRIRLRELGIRNIYLKHADGMRGLLEAGPFDGIMMTAVIPEIPETLLEQLAMGGRMVFPKGNRQQYLCVIDHTTEGFVETILDEVMFVPILPGTINR.

Ser69 is an active-site residue.

The protein belongs to the methyltransferase superfamily. L-isoaspartyl/D-aspartyl protein methyltransferase family.

Its subcellular location is the cytoplasm. The catalysed reaction is [protein]-L-isoaspartate + S-adenosyl-L-methionine = [protein]-L-isoaspartate alpha-methyl ester + S-adenosyl-L-homocysteine. In terms of biological role, catalyzes the methyl esterification of L-isoaspartyl residues in peptides and proteins that result from spontaneous decomposition of normal L-aspartyl and L-asparaginyl residues. It plays a role in the repair and/or degradation of damaged proteins. The protein is Protein-L-isoaspartate O-methyltransferase of Nitrosomonas eutropha (strain DSM 101675 / C91 / Nm57).